The sequence spans 798 residues: Penicillin-binding protein 1A (798 aa).

Topologically, residues 1 to 9 (MIKKIITTC) are cytoplasmic. Residues 10–30 (MGLNNGLALFGVGLIAIAILV) form a helical; Signal-anchor for type II membrane protein membrane-spanning segment. At 31–798 (TYPKLPSLDS…NNRQQLDSLF (768 aa)) the chain is on the periplasmic side. Positions 50 to 218 (LTIYSSDGQV…SAYNPIVNPE (169 aa)) are transglycosylase. E88 (proton donor; for transglycosylase activity) is an active-site residue. The transpeptidase stretch occupies residues 413–699 (TVVQEPLLQG…GTIAVPVWVE (287 aa)). The Acyl-ester intermediate; for transpeptidase activity role is filled by S460. Positions 734–798 (TSSDLALDNS…NNRQQLDSLF (65 aa)) are disordered. Polar residues predominate over residues 782–798 (LPSNTGNNNRQQLDSLF).

This sequence in the N-terminal section; belongs to the glycosyltransferase 51 family. The protein in the C-terminal section; belongs to the transpeptidase family.

It localises to the cell inner membrane. It catalyses the reaction [GlcNAc-(1-&gt;4)-Mur2Ac(oyl-L-Ala-gamma-D-Glu-L-Lys-D-Ala-D-Ala)](n)-di-trans,octa-cis-undecaprenyl diphosphate + beta-D-GlcNAc-(1-&gt;4)-Mur2Ac(oyl-L-Ala-gamma-D-Glu-L-Lys-D-Ala-D-Ala)-di-trans,octa-cis-undecaprenyl diphosphate = [GlcNAc-(1-&gt;4)-Mur2Ac(oyl-L-Ala-gamma-D-Glu-L-Lys-D-Ala-D-Ala)](n+1)-di-trans,octa-cis-undecaprenyl diphosphate + di-trans,octa-cis-undecaprenyl diphosphate + H(+). It carries out the reaction Preferential cleavage: (Ac)2-L-Lys-D-Ala-|-D-Ala. Also transpeptidation of peptidyl-alanyl moieties that are N-acyl substituents of D-alanine.. Its pathway is cell wall biogenesis; peptidoglycan biosynthesis. Functionally, cell wall formation. Synthesis of cross-linked peptidoglycan from the lipid intermediates. The enzyme has a penicillin-insensitive transglycosylase N-terminal domain (formation of linear glycan strands) and a penicillin-sensitive transpeptidase C-terminal domain (cross-linking of the peptide subunits). In Neisseria flavescens, this protein is Penicillin-binding protein 1A (mrcA).